The sequence spans 188 residues: Ribosome-recycling factor (188 aa).

Belongs to the RRF family.

It is found in the cytoplasm. In terms of biological role, responsible for the release of ribosomes from messenger RNA at the termination of protein biosynthesis. May increase the efficiency of translation by recycling ribosomes from one round of translation to another. The protein is Ribosome-recycling factor of Gluconobacter oxydans (strain 621H) (Gluconobacter suboxydans).